The primary structure comprises 339 residues: DNA-directed RNA polymerase subunit alpha (339 aa).

The segment at 1–235 is alpha N-terminal domain (alpha-NTD); it reads MVLQKNWQSL…DQLQLFINFD (235 aa). The alpha C-terminal domain (alpha-CTD) stretch occupies residues 251 to 339; sequence FNRNLLRKVD…DLAKRLDETF (89 aa).

This sequence belongs to the RNA polymerase alpha chain family. As to quaternary structure, homodimer. The RNAP catalytic core consists of 2 alpha, 1 beta, 1 beta' and 1 omega subunit. When a sigma factor is associated with the core the holoenzyme is formed, which can initiate transcription.

The enzyme catalyses RNA(n) + a ribonucleoside 5'-triphosphate = RNA(n+1) + diphosphate. Its function is as follows. DNA-dependent RNA polymerase catalyzes the transcription of DNA into RNA using the four ribonucleoside triphosphates as substrates. This Gluconobacter oxydans (strain 621H) (Gluconobacter suboxydans) protein is DNA-directed RNA polymerase subunit alpha.